The chain runs to 234 residues: tRNA (guanine-N(1)-)-methyltransferase (234 aa).

S-adenosyl-L-methionine contacts are provided by residues G115 and 135 to 140 (VGDYIL).

Belongs to the RNA methyltransferase TrmD family. In terms of assembly, homodimer.

It is found in the cytoplasm. It carries out the reaction guanosine(37) in tRNA + S-adenosyl-L-methionine = N(1)-methylguanosine(37) in tRNA + S-adenosyl-L-homocysteine + H(+). In terms of biological role, specifically methylates guanosine-37 in various tRNAs. The protein is tRNA (guanine-N(1)-)-methyltransferase of Rickettsia rickettsii (strain Iowa).